Consider the following 678-residue polypeptide: Glycine--tRNA ligase beta subunit (678 aa).

Belongs to the class-II aminoacyl-tRNA synthetase family. As to quaternary structure, tetramer of two alpha and two beta subunits.

The protein resides in the cytoplasm. It catalyses the reaction tRNA(Gly) + glycine + ATP = glycyl-tRNA(Gly) + AMP + diphosphate. This is Glycine--tRNA ligase beta subunit from Streptococcus pneumoniae serotype 19F (strain G54).